A 241-amino-acid chain; its full sequence is Carboxy-S-adenosyl-L-methionine synthase (241 aa).

S-adenosyl-L-methionine-binding positions include tyrosine 38, 63–65 (GCS), 88–89 (DN), 116–117 (DI), asparagine 131, and arginine 198.

Belongs to the class I-like SAM-binding methyltransferase superfamily. Cx-SAM synthase family. As to quaternary structure, homodimer.

The enzyme catalyses prephenate + S-adenosyl-L-methionine = carboxy-S-adenosyl-L-methionine + 3-phenylpyruvate + H2O. Catalyzes the conversion of S-adenosyl-L-methionine (SAM) to carboxy-S-adenosyl-L-methionine (Cx-SAM). In Mannheimia succiniciproducens (strain KCTC 0769BP / MBEL55E), this protein is Carboxy-S-adenosyl-L-methionine synthase.